The following is a 450-amino-acid chain: Involucrin (450 aa).

Positions Met1–Leu19 are enriched in polar residues. 3 disordered regions span residues Met1–Pro43, Gln77–Lys370, and Pro422–Val450. The segment covering Gln86–Lys108 has biased composition (basic and acidic residues). The span at Gly120–Leu135 shows a compositional bias: low complexity. Composition is skewed to basic and acidic residues over residues Leu187–Leu200 and Gln264–Leu281. Positions Gly295–Thr344 are enriched in low complexity. Positions Ala345–Lys370 are enriched in basic and acidic residues.

Belongs to the involucrin family. As to quaternary structure, directly or indirectly cross-linked to cornifelin (CNFN). Substrate of transglutaminase. Specific glutamines or lysines are cross-linked to keratins, desmoplakin and to inter involucrin molecules. Keratinocytes of epidermis and other stratified squamous epithelia.

It localises to the cytoplasm. In terms of biological role, part of the insoluble cornified cell envelope (CE) of stratified squamous epithelia. This Lemur catta (Ring-tailed lemur) protein is Involucrin (IVL).